The following is a 187-amino-acid chain: UPF0301 protein HSM_1900 (187 aa).

This sequence belongs to the UPF0301 (AlgH) family.

The sequence is that of UPF0301 protein HSM_1900 from Histophilus somni (strain 2336) (Haemophilus somnus).